An 812-amino-acid polypeptide reads, in one-letter code: DNA replication licensing factor MCM3 (812 aa).

Ala2 is subject to N-acetylalanine. Position 160 is a phosphoserine (Ser160). Residue Lys293 is modified to N6-acetyllysine. Residues Val295 to Leu502 enclose the MCM domain. ADP is bound by residues Gln353, Leu393, Glu394, Ala395, and Ala397. Positions Ser477–Asp480 match the Arginine finger motif. An N6-acetyllysine modification is found at Lys547. A Phosphoserine modification is found at Ser611. Arg664 lines the ATP pocket. A disordered region spans residues Arg664 to Ser744. A phosphoserine mark is found at Ser668, Ser672, and Ser681. Over residues Asp670–Ser681 the composition is skewed to acidic residues. Phosphotyrosine is present on Tyr705. Phosphoserine is present on Ser708. Phosphothreonine is present on residues Thr719, Thr722, and Thr729. The segment covering Pro720–Ser744 has biased composition (basic and acidic residues). A phosphoserine mark is found at Ser732 and Ser738.

It belongs to the MCM family. Component of the MCM2-7 complex. The complex forms a toroidal hexameric ring with the proposed subunit order MCM2-MCM6-MCM4-MCM7-MCM3-MCM5. Component of the CMG helicase complex, a hexameric ring of related MCM2-7 subunits stabilized by CDC45 and the tetrameric GINS complex. Associated with the replication-specific DNA polymerase alpha. Interacts with MCMBP. Interacts with ANKRD17. Interacts with MCM3AP; this interaction leads to MCM3 acetylation. Acetylated by MCM3AP. In terms of processing, O-glycosylated (O-GlcNAcylated), in a cell cycle-dependent manner.

The protein resides in the nucleus. It localises to the chromosome. The enzyme catalyses ATP + H2O = ADP + phosphate + H(+). Its function is as follows. Acts as a component of the MCM2-7 complex (MCM complex) which is the replicative helicase essential for 'once per cell cycle' DNA replication initiation and elongation in eukaryotic cells. Core component of CDC45-MCM-GINS (CMG) helicase, the molecular machine that unwinds template DNA during replication, and around which the replisome is built. The active ATPase sites in the MCM2-7 ring are formed through the interaction surfaces of two neighboring subunits such that a critical structure of a conserved arginine finger motif is provided in trans relative to the ATP-binding site of the Walker A box of the adjacent subunit. The six ATPase active sites, however, are likely to contribute differentially to the complex helicase activity. Required for the entry in S phase and for cell division. The protein is DNA replication licensing factor MCM3 (Mcm3) of Mus musculus (Mouse).